Consider the following 379-residue polypeptide: ATPase ASNA1 homolog (379 aa).

The segment at 1–20 (MSEDESNSVSCSLSLESDGY) is disordered. The segment covering 7-18 (NSVSCSLSLESD) has biased composition (low complexity). An ATP-binding site is contributed by 46–53 (KGGVGKTT). D75 is an active-site residue. E246 and N273 together coordinate ATP.

Belongs to the arsA ATPase family. In terms of assembly, homodimer.

It localises to the cytoplasm. Its subcellular location is the endoplasmic reticulum. Its function is as follows. ATPase required for the post-translational delivery of tail-anchored (TA) proteins to the endoplasmic reticulum. Recognizes and selectively binds the transmembrane domain of TA proteins in the cytosol. This complex then targets to the endoplasmic reticulum by membrane-bound receptors, where the tail-anchored protein is released for insertion. This process is regulated by ATP binding and hydrolysis. ATP binding drives the homodimer towards the closed dimer state, facilitating recognition of newly synthesized TA membrane proteins. ATP hydrolysis is required for insertion. Subsequently, the homodimer reverts towards the open dimer state, lowering its affinity for the membrane-bound receptor, and returning it to the cytosol to initiate a new round of targeting. This Plasmodium falciparum (isolate 3D7) protein is ATPase ASNA1 homolog.